A 207-amino-acid polypeptide reads, in one-letter code: MRAIRMLLVSALTLGSVTAYAGEQDVQRLTQLLEKSQTIEANFSQLTLGADGTSLQETSGKMTVKRPGLFYWHTDAPQEQVVVSDGKNVTLWDPDLEQATIKKLDVRLNQTPALLLSGDVSKISQSFDIASKEQGEVMDFTLKPKTKDTLFDSLRVSFRKGLINDMQLIDSVGQRTNILFNGVKANQAVPDSKFKFDIPKGADVIKE.

The signal sequence occupies residues 1–21 (MRAIRMLLVSALTLGSVTAYA).

It belongs to the LolA family. As to quaternary structure, monomer.

The protein resides in the periplasm. Participates in the translocation of lipoproteins from the inner membrane to the outer membrane. Only forms a complex with a lipoprotein if the residue after the N-terminal Cys is not an aspartate (The Asp acts as a targeting signal to indicate that the lipoprotein should stay in the inner membrane). The protein is Outer-membrane lipoprotein carrier protein of Pseudomonas putida (strain ATCC 47054 / DSM 6125 / CFBP 8728 / NCIMB 11950 / KT2440).